The sequence spans 319 residues: Aspartate carbamoyltransferase catalytic subunit (319 aa).

The carbamoyl phosphate site is built by Arg59 and Thr60. Lys87 lines the L-aspartate pocket. Residues Arg109, His137, and Gln140 each contribute to the carbamoyl phosphate site. L-aspartate-binding residues include Arg170 and Arg224. Positions 265 and 266 each coordinate carbamoyl phosphate.

This sequence belongs to the aspartate/ornithine carbamoyltransferase superfamily. ATCase family. Heterododecamer (2C3:3R2) of six catalytic PyrB chains organized as two trimers (C3), and six regulatory PyrI chains organized as three dimers (R2).

It catalyses the reaction carbamoyl phosphate + L-aspartate = N-carbamoyl-L-aspartate + phosphate + H(+). It participates in pyrimidine metabolism; UMP biosynthesis via de novo pathway; (S)-dihydroorotate from bicarbonate: step 2/3. Functionally, catalyzes the condensation of carbamoyl phosphate and aspartate to form carbamoyl aspartate and inorganic phosphate, the committed step in the de novo pyrimidine nucleotide biosynthesis pathway. The polypeptide is Aspartate carbamoyltransferase catalytic subunit (Gemmatimonas aurantiaca (strain DSM 14586 / JCM 11422 / NBRC 100505 / T-27)).